The primary structure comprises 343 residues: Probable dual-specificity RNA methyltransferase RlmN (343 aa).

Glutamate 93 (proton acceptor) is an active-site residue. Positions 99–320 (TDDRATLCVS…NAKGVVCTIR (222 aa)) constitute a Radical SAM core domain. Cysteine 106 and cysteine 331 are joined by a disulfide. Residues cysteine 113, cysteine 117, and cysteine 120 each coordinate [4Fe-4S] cluster. S-adenosyl-L-methionine contacts are provided by residues 158–159 (GE), serine 190, 212–214 (SLH), and histidine 288. The S-methylcysteine intermediate role is filled by cysteine 331.

This sequence belongs to the radical SAM superfamily. RlmN family. Requires [4Fe-4S] cluster as cofactor.

It localises to the cytoplasm. The enzyme catalyses adenosine(2503) in 23S rRNA + 2 reduced [2Fe-2S]-[ferredoxin] + 2 S-adenosyl-L-methionine = 2-methyladenosine(2503) in 23S rRNA + 5'-deoxyadenosine + L-methionine + 2 oxidized [2Fe-2S]-[ferredoxin] + S-adenosyl-L-homocysteine. It catalyses the reaction adenosine(37) in tRNA + 2 reduced [2Fe-2S]-[ferredoxin] + 2 S-adenosyl-L-methionine = 2-methyladenosine(37) in tRNA + 5'-deoxyadenosine + L-methionine + 2 oxidized [2Fe-2S]-[ferredoxin] + S-adenosyl-L-homocysteine. Its function is as follows. Specifically methylates position 2 of adenine 2503 in 23S rRNA and position 2 of adenine 37 in tRNAs. This chain is Probable dual-specificity RNA methyltransferase RlmN, found in Parabacteroides distasonis (strain ATCC 8503 / DSM 20701 / CIP 104284 / JCM 5825 / NCTC 11152).